We begin with the raw amino-acid sequence, 358 residues long: Vascular endothelial growth factor D (358 aa).

The N-terminal stretch at 1–21 (MYGEWGMGNILMMFHVYLVQG) is a signal peptide. Positions 22–93 (FRSEHGPVKD…SRSASHRSTR (72 aa)) are excised as a propeptide. 3 disulfides stabilise this stretch: cysteine 116–cysteine 158, cysteine 147–cysteine 194, and cysteine 151–cysteine 196. Residues asparagine 160 and asparagine 190 are each glycosylated (N-linked (GlcNAc...) asparagine). The propeptide occupies 211 to 358 (SIQTPEEDEC…AQGLYSQENP (148 aa)). The 1; approximate repeat unit spans residues 227–242 (CPIDMLWDNTKCKCVL). The tract at residues 227-323 (CPIDMLWDNT…PDTCSCEDRC (97 aa)) is 4 X 16 AA repeats of C-X(10)-C-X-C-X(1,3)-C. Tandem repeats lie at residues 263-278 (CGPHMTFDEDRCECVC), 282-298 (CPGDLIQHPENCSCFEC), and 306-323 (CQKHKIFHPDTCSCEDRC). Residue asparagine 292 is glycosylated (N-linked (GlcNAc...) asparagine).

This sequence belongs to the PDGF/VEGF growth factor family. Homodimer; non-covalent and antiparallel. Undergoes a complex proteolytic maturation which generates a variety of processed secreted forms with increased activity toward VEGFR-3 and VEGFR-2. VEGF-D first form an antiparallel homodimer linked by disulfide bonds before secretion. The fully processed VEGF-D is composed mostly of two VEGF homology domains (VHDs) bound by non-covalent interactions. Highly expressed in fetal and adult lung.

It localises to the secreted. Functionally, growth factor active in angiogenesis, lymphangiogenesis and endothelial cell growth, stimulating their proliferation and migration and also has effects on the permeability of blood vessels. May function in the formation of the venous and lymphatic vascular systems during embryogenesis, and also in the maintenance of differentiated lymphatic endothelium in adults. Binds and activates VEGFR-3 (Flt4) receptor. In Mus musculus (Mouse), this protein is Vascular endothelial growth factor D.